We begin with the raw amino-acid sequence, 281 residues long: NH(3)-dependent NAD(+) synthetase (281 aa).

Residue 24-31 (GVSGGVDS) participates in ATP binding. Position 30 (Asp-30) interacts with Mg(2+). Arg-145 contacts deamido-NAD(+). Thr-165 contacts ATP. Mg(2+) is bound at residue Glu-170. Residues Lys-178 and Asp-185 each coordinate deamido-NAD(+). The ATP site is built by Lys-194 and Ser-216.

It belongs to the NAD synthetase family. As to quaternary structure, homodimer.

It catalyses the reaction deamido-NAD(+) + NH4(+) + ATP = AMP + diphosphate + NAD(+) + H(+). It functions in the pathway cofactor biosynthesis; NAD(+) biosynthesis; NAD(+) from deamido-NAD(+) (ammonia route): step 1/1. Functionally, catalyzes the ATP-dependent amidation of deamido-NAD to form NAD. Uses ammonia as a nitrogen source. The sequence is that of NH(3)-dependent NAD(+) synthetase (nadE1) from Thermotoga maritima (strain ATCC 43589 / DSM 3109 / JCM 10099 / NBRC 100826 / MSB8).